We begin with the raw amino-acid sequence, 910 residues long: Dimethylsulfide dehydrogenase subunit alpha (910 aa).

Positions Met1–Ala28 form a signal peptide, tat-type signal. The 4Fe-4S Mo/W bis-MGD-type domain occupies Asp59–Asp123. His66, Cys70, Cys74, and Cys109 together coordinate [4Fe-4S] cluster.

Belongs to the prokaryotic molybdopterin-containing oxidoreductase family. In terms of assembly, heterotrimer of alpha, beta and gamma subunits. [4Fe-4S] cluster is required as a cofactor. It depends on Mo-bis(molybdopterin guanine dinucleotide) as a cofactor. Predicted to be exported by the Tat system. The position of the signal peptide cleavage has been experimentally proven.

The protein localises to the periplasm. The catalysed reaction is 2 Fe(III)-[cytochrome c2] + dimethyl sulfide + H2O = 2 Fe(II)-[cytochrome c2] + dimethyl sulfoxide + 2 H(+). In terms of biological role, allows photoautotrophic growth on dimethyl sulfide (DMS) as the sole electron donor. In Rhodovulum sulfidophilum (Rhodobacter sulfidophilus), this protein is Dimethylsulfide dehydrogenase subunit alpha (ddhA).